The sequence spans 597 residues: Elongation factor 4 (597 aa).

The region spanning 2–184 is the tr-type G domain; the sequence is QHIRNFSIIA…AIVARVPSPE (183 aa). GTP contacts are provided by residues 14–19 and 131–134; these read DHGKST and NKMD.

It belongs to the TRAFAC class translation factor GTPase superfamily. Classic translation factor GTPase family. LepA subfamily.

The protein resides in the cell inner membrane. It catalyses the reaction GTP + H2O = GDP + phosphate + H(+). Required for accurate and efficient protein synthesis under certain stress conditions. May act as a fidelity factor of the translation reaction, by catalyzing a one-codon backward translocation of tRNAs on improperly translocated ribosomes. Back-translocation proceeds from a post-translocation (POST) complex to a pre-translocation (PRE) complex, thus giving elongation factor G a second chance to translocate the tRNAs correctly. Binds to ribosomes in a GTP-dependent manner. The polypeptide is Elongation factor 4 (Bordetella avium (strain 197N)).